A 718-amino-acid chain; its full sequence is Glycine--tRNA ligase beta subunit (718 aa).

The protein belongs to the class-II aminoacyl-tRNA synthetase family. In terms of assembly, tetramer of two alpha and two beta subunits.

It localises to the cytoplasm. It catalyses the reaction tRNA(Gly) + glycine + ATP = glycyl-tRNA(Gly) + AMP + diphosphate. This chain is Glycine--tRNA ligase beta subunit, found in Mesorhizobium japonicum (strain LMG 29417 / CECT 9101 / MAFF 303099) (Mesorhizobium loti (strain MAFF 303099)).